The following is a 499-amino-acid chain: MLSTSSRSFKSKFRAAFWPVHNYELGKFIPMSALMFCILFNQNILRILKDSILISEISAEIAGFAKVYCVTPAAALFVIIYAKMINRFTFEKIFYYLSAFFISFFVLFAFVIYPNIHVFHVHPDNLADWMERYPHFKWYISLVGNWGYIVYYSLAELWPNIFYVLLFWQFANELTTTEEAKRFYTFFSLFGNSSLILVGFLMMNLSSEDTIIKKFMSISDSKITLVQVSTTIVAIVAIVCCVLVRFISKNVFTNPLFYAKAKSGRSTSERMGLIKSFKYIAKSKYLWLLLICSAAFGFAINLVEAVWKAKIKELYPTVNTYAEFNSLYILWTGVAIMVMTIIGNNVMRMHNWFVAAVISPVIIMVTGILFFVLIVFDQQILSLFDGAILMSPLALAVSIGGIQNILAKGTKYSIWDTSREMLYIPLDDELKTKGKAAVDVISAKVGKSSSGLVQSIIFTLVPTATFTSISPILMVVFTFVCLAWIYAVRKIYFEYQKIA.

11 helical membrane passes run 25 to 45 (LGKF…QNIL), 61 to 81 (IAGF…VIIY), 93 to 113 (IFYY…FVIY), 148 to 168 (YIVY…LLFW), 183 to 203 (FYTF…FLMM), 223 to 243 (ITLV…CCVL), 286 to 306 (LWLL…VEAV), 327 to 347 (LYIL…NNVM), 356 to 376 (AVIS…LIVF), 380 to 400 (ILSL…VSIG), and 468 to 488 (SISP…IYAV).

The protein belongs to the ADP/ATP translocase tlc family.

Its subcellular location is the cell membrane. Its function is as follows. Provides the rickettsial cell with host ATP in exchange for rickettsial ADP. This is an obligate exchange system. This energy acquiring activity is an important component of rickettsial parasitism. The polypeptide is ADP,ATP carrier protein 5 (tlcE) (Rickettsia felis (strain ATCC VR-1525 / URRWXCal2) (Rickettsia azadi)).